Here is a 122-residue protein sequence, read N- to C-terminus: Large ribosomal subunit protein uL14 (122 aa).

This sequence belongs to the universal ribosomal protein uL14 family. In terms of assembly, part of the 50S ribosomal subunit. Forms a cluster with proteins L3 and L19. In the 70S ribosome, L14 and L19 interact and together make contacts with the 16S rRNA in bridges B5 and B8.

In terms of biological role, binds to 23S rRNA. Forms part of two intersubunit bridges in the 70S ribosome. The chain is Large ribosomal subunit protein uL14 from Teredinibacter turnerae (strain ATCC 39867 / T7901).